An 87-amino-acid chain; its full sequence is MKTLLLTLVVVTIVCLDLGYTKTCLKTPSSTPQTCPQGQDICFLKVSCEQFCPIRGPVIEQGCAATCPEFRSNDRSLLCCTTDNCNH.

An N-terminal signal peptide occupies residues 1-21; it reads MKTLLLTLVVVTIVCLDLGYT. Disulfide bonds link C24–C42, C35–C63, C48–C52, C67–C79, and C80–C85.

This sequence belongs to the three-finger toxin family. Long-chain subfamily. Kappa-neurotoxin sub-subfamily. Homodimer and heterodimer with kappa 3-bungarotoxin; non-covalently linked. Expressed by the venom gland.

The protein localises to the secreted. In terms of biological role, postsynaptic neurotoxin that binds and inhibits neuronal nicotinic acetylcholine receptors (nAChR) with high affinity (IC(50)&lt;100 nM). Is a selective, and slowly reversible antagonist of alpha-3/CHRNA3-containing and some alpha-4/CHRNA4-containing AChRs. The chain is Kappa-2-bungarotoxin from Bungarus multicinctus (Many-banded krait).